Reading from the N-terminus, the 285-residue chain is Ribonuclease Z (285 aa).

Zn(2+) is bound by residues histidine 61, histidine 63, aspartate 65, histidine 66, histidine 152, aspartate 175, and histidine 239. Aspartate 65 serves as the catalytic Proton acceptor.

This sequence belongs to the RNase Z family. As to quaternary structure, homodimer. Requires Zn(2+) as cofactor.

It catalyses the reaction Endonucleolytic cleavage of RNA, removing extra 3' nucleotides from tRNA precursor, generating 3' termini of tRNAs. A 3'-hydroxy group is left at the tRNA terminus and a 5'-phosphoryl group is left at the trailer molecule.. In terms of biological role, zinc phosphodiesterase, which displays some tRNA 3'-processing endonuclease activity. Probably involved in tRNA maturation, by removing a 3'-trailer from precursor tRNA. The chain is Ribonuclease Z from Mycobacterium sp. (strain JLS).